Here is a 498-residue protein sequence, read N- to C-terminus: N-acyl-D-aspartate deacylase (498 aa).

The tract at residues 478 to 498 (AERPGQVLAPGDAIPWSQQSE) is disordered.

This sequence belongs to the metallo-dependent hydrolases superfamily. N-acyl-D-amino-acid deacylase family. It depends on Zn(2+) as a cofactor.

It is found in the cytoplasm. The enzyme catalyses an N-acyl-D-aspartate + H2O = D-aspartate + a carboxylate. The protein is N-acyl-D-aspartate deacylase of Alcaligenes xylosoxydans xylosoxydans (Achromobacter xylosoxidans).